Here is a 2625-residue protein sequence, read N- to C-terminus: Highly reducing polyketide synthase frbB (2625 aa).

The segment covering 1-10 (MRNIDEHMSE) has biased composition (basic and acidic residues). The disordered stretch occupies residues 1–25 (MRNIDEHMSERATLQSSGGYGERDS). A Ketosynthase family 3 (KS3) domain is found at 27-449 (VEPIAIIGMS…GTNAHVILDR (423 aa)). Residues C200, H334, and H375 each act as for beta-ketoacyl synthase activity in the active site. Residues 563-883 (YVFSGQGAQY…DAASTLLTTI (321 aa)) are malonyl-CoA:ACP transacylase (MAT) domain. The interval 942–1080 (HELLGNMSTD…GRIRAVLDDS (139 aa)) is N-terminal hotdog fold. The interval 942–1252 (HELLGNMSTD…GMILAKLPGG (311 aa)) is dehydratase (DH) domain. One can recognise a PKS/mFAS DH domain in the interval 942 to 1255 (HELLGNMSTD…LAKLPGGTSR (314 aa)). H974 functions as the Proton acceptor; for dehydratase activity in the catalytic mechanism. The interval 1102 to 1255 (VRFVSPSAFY…LAKLPGGTSR (154 aa)) is C-terminal hotdog fold. Catalysis depends on D1167, which acts as the Proton donor; for dehydratase activity. The methyltransferase (CMet) domain stretch occupies residues 1490–1673 (YHQIKAYIAE…GFVDTEPVFR (184 aa)). An enoyl reductase (ER) domain region spans residues 1907–2220 (GLLETFHWKP…SGKHIGKVIL (314 aa)). The ketoreductase (KR) domain stretch occupies residues 2261 to 2439 (AVYIVVGGLG…GYSINIGPVS (179 aa)). The 78-residue stretch at 2542 to 2619 (GAEAAVLTAI…HLARLAAEES (78 aa)) folds into the Carrier domain. Residue S2579 is modified to O-(pantetheine 4'-phosphoryl)serine.

Its pathway is antifungal biosynthesis. In terms of biological role, highly reducing polyketide synthase; part of the gene cluster that mediates the biosynthesis of the antifungal antibiotic FR901469, an inhibitor of beta-1,3-glucansynthase, exerting antifungal activity against the pathogenes Candida albicans and Aspergillus fumigatus. FR901469 is a cyclic depsipeptide containing 12 amino acid residues and a fatty acid chain. The NRPS frbI contains 12 modules responsible for the formation of the depsipeptide backbone which is denoted as Acyl-Thr-Ala-Tyr-Val-4OHPro-Thr-Thr-3OHPro-threo3OHGln-Gly-Thr-Orn-OH (C71H116N14O23). The PKS frbB is probably involved in the production of the hydrocarbon chain, and the acyl-CoA ligase frbC might be involved in the transport of the chain to the peptide ptoduct of frbI. Because FR901469 contains 3 hydroxylated amino acid residues, the 3 oxygenases frbA, frbH, and frbJ might be participating in amino acid hydroxylation. As no thioesterase domains were detected in frbI or frbB, the thioesterases frbD and frbE may instead release and cyclize the products of the NRPS and PKS, respectively. This Dothideomycetidae sp. (strain 11243) (Fungal sp. (strain No.11243)) protein is Highly reducing polyketide synthase frbB.